Reading from the N-terminus, the 98-residue chain is uncharacterized protein (98 aa).

This is an uncharacterized protein from Sulfolobus islandicus filamentous virus (isolate Iceland/Hveragerdi) (SIFV).